A 392-amino-acid chain; its full sequence is Lipid-A-disaccharide synthase (392 aa).

It belongs to the LpxB family.

It carries out the reaction a lipid X + a UDP-2-N,3-O-bis[(3R)-3-hydroxyacyl]-alpha-D-glucosamine = a lipid A disaccharide + UDP + H(+). The protein operates within bacterial outer membrane biogenesis; LPS lipid A biosynthesis. In terms of biological role, condensation of UDP-2,3-diacylglucosamine and 2,3-diacylglucosamine-1-phosphate to form lipid A disaccharide, a precursor of lipid A, a phosphorylated glycolipid that anchors the lipopolysaccharide to the outer membrane of the cell. This is Lipid-A-disaccharide synthase from Prochlorococcus marinus (strain MIT 9313).